The chain runs to 459 residues: Cysteine--tRNA ligase (459 aa).

Cys27 is a Zn(2+) binding site. The 'HIGH' region signature appears at 29 to 39 (VTVYDDCHIGH). Residues Cys208, His233, and Glu237 each coordinate Zn(2+). Residues 265-269 (KMSKS) carry the 'KMSKS' region motif. Lys268 contributes to the ATP binding site.

This sequence belongs to the class-I aminoacyl-tRNA synthetase family. Monomer. The cofactor is Zn(2+).

It localises to the cytoplasm. The enzyme catalyses tRNA(Cys) + L-cysteine + ATP = L-cysteinyl-tRNA(Cys) + AMP + diphosphate. The polypeptide is Cysteine--tRNA ligase (Francisella tularensis subsp. mediasiatica (strain FSC147)).